A 598-amino-acid chain; its full sequence is 4-coumarate--CoA ligase-like 6 (598 aa).

Residues Ser232, Ser233, Gly234, Thr235, Thr236, and Lys240 each coordinate ATP. Arg318 serves as a coordination point for CoA. The segment at Asp320–Gln389 is SBD1. (E)-4-coumaroyl-AMP is bound by residues Gly367, Gln389, and Thr394. ATP-binding residues include Gln389, Thr394, Asp475, and Arg490. Residues Ser390–Tyr454 form an SBD2 region. Residues Lys492 and Lys496 each contribute to the (E)-4-coumaroyl-AMP site. The CoA site is built by Lys498 and Gly499. Position 581 (Lys581) interacts with ATP.

This sequence belongs to the ATP-dependent AMP-binding enzyme family. It depends on Mg(2+) as a cofactor.

It catalyses the reaction (E)-4-coumarate + ATP + CoA = (E)-4-coumaroyl-CoA + AMP + diphosphate. It carries out the reaction (E)-4-coumarate + ATP + H(+) = (E)-4-coumaroyl-AMP + diphosphate. The enzyme catalyses (E)-4-coumaroyl-AMP + CoA = (E)-4-coumaroyl-CoA + AMP + H(+). Its function is as follows. Carboxylate--CoA ligase that may use 4-coumarate as substrate. Follows a two-step reaction mechanism, wherein the carboxylate substrate first undergoes adenylation by ATP, followed by a thioesterification in the presence of CoA to yield the final CoA thioester. This Oryza sativa subsp. japonica (Rice) protein is 4-coumarate--CoA ligase-like 6 (4CLL6).